The sequence spans 351 residues: Phenylalanine--tRNA ligase alpha subunit (351 aa).

Residue E276 coordinates Mg(2+).

It belongs to the class-II aminoacyl-tRNA synthetase family. Phe-tRNA synthetase alpha subunit type 1 subfamily. Tetramer of two alpha and two beta subunits. Mg(2+) is required as a cofactor.

The protein localises to the cytoplasm. The enzyme catalyses tRNA(Phe) + L-phenylalanine + ATP = L-phenylalanyl-tRNA(Phe) + AMP + diphosphate + H(+). The protein is Phenylalanine--tRNA ligase alpha subunit of Psychrobacter arcticus (strain DSM 17307 / VKM B-2377 / 273-4).